An 88-amino-acid chain; its full sequence is Small ribosomal subunit protein bS20 (88 aa).

2 disordered regions span residues 1-23 (MANSPQARKRARQAENRRQHNAA) and 69-88 (PNKAARHKSRLNTKIKAMAA). The span at 69–81 (PNKAARHKSRLNT) shows a compositional bias: basic residues.

The protein belongs to the bacterial ribosomal protein bS20 family.

In terms of biological role, binds directly to 16S ribosomal RNA. The polypeptide is Small ribosomal subunit protein bS20 (Alcanivorax borkumensis (strain ATCC 700651 / DSM 11573 / NCIMB 13689 / SK2)).